Here is a 322-residue protein sequence, read N- to C-terminus: MDTSSINAQSIFDDNAAALKLSWLTGHEGWERGFSAETVATATSSADLVGHLNLIHPNRIQVLGEAETNYYQRQSDEDRSRHMAELIALEPPFLVVAGGVAAPPELVLRCTRSSTPLFTTPMSPAAVIDSLRLYMSRILAPRATLHGVFLDILGMGVLLTGDSGLGKSELGLELISRGHGLVADDAVDFVRLGPDFVEGRCPPLLQNLLEVRGLGLLDIKTIFGETAVRRKMKLKLIVQLVRRPDGEFQRLPLESQTVDVLGLPISKVTIQVAAGRNLAVLVEAAVRNTILQLRGIDTLRDFMDRQRLAMQDPDSQFPGKLI.

Residues His146 and Lys167 contribute to the active site. 161 to 168 (GDSGLGKS) is an ATP binding site. Mg(2+) is bound at residue Ser168. Residue Asp185 is the Proton acceptor; for phosphorylation activity. Proton donor; for dephosphorylation activity of the active site. Residues 209–218 (LEVRGLGLLD) form an important for the catalytic mechanism of both phosphorylation and dephosphorylation region. Glu210 is a binding site for Mg(2+). Arg250 is a catalytic residue. The important for the catalytic mechanism of dephosphorylation stretch occupies residues 271 to 276 (QVAAGR).

Belongs to the HPrK/P family. Homohexamer. Requires Mg(2+) as cofactor.

It carries out the reaction [HPr protein]-L-serine + ATP = [HPr protein]-O-phospho-L-serine + ADP + H(+). It catalyses the reaction [HPr protein]-O-phospho-L-serine + phosphate + H(+) = [HPr protein]-L-serine + diphosphate. Catalyzes the ATP- as well as the pyrophosphate-dependent phosphorylation of a specific serine residue in HPr, a phosphocarrier protein of the phosphoenolpyruvate-dependent sugar phosphotransferase system (PTS). HprK/P also catalyzes the pyrophosphate-producing, inorganic phosphate-dependent dephosphorylation (phosphorolysis) of seryl-phosphorylated HPr (P-Ser-HPr). The polypeptide is HPr kinase/phosphorylase (Paraburkholderia phymatum (strain DSM 17167 / CIP 108236 / LMG 21445 / STM815) (Burkholderia phymatum)).